A 234-amino-acid chain; its full sequence is Purine nucleoside phosphorylase DeoD-type (234 aa).

Histidine 5 is an a purine D-ribonucleoside binding site. Phosphate contacts are provided by residues glycine 21, arginine 25, arginine 44, and 88–91; that span reads RIGT. A purine D-ribonucleoside is bound by residues 180-182 and 204-205; these read DME and SD. The active-site Proton donor is aspartate 205.

This sequence belongs to the PNP/UDP phosphorylase family. As to quaternary structure, homohexamer; trimer of homodimers.

It carries out the reaction a purine D-ribonucleoside + phosphate = a purine nucleobase + alpha-D-ribose 1-phosphate. It catalyses the reaction a purine 2'-deoxy-D-ribonucleoside + phosphate = a purine nucleobase + 2-deoxy-alpha-D-ribose 1-phosphate. Catalyzes the reversible phosphorolytic breakdown of the N-glycosidic bond in the beta-(deoxy)ribonucleoside molecules, with the formation of the corresponding free purine bases and pentose-1-phosphate. This chain is Purine nucleoside phosphorylase DeoD-type, found in Buchnera aphidicola subsp. Acyrthosiphon pisum (strain 5A).